The primary structure comprises 569 residues: Glutamate--tRNA ligase (569 aa).

The 'HIGH' region motif lies at 99–109; that stretch reads PEPNGYPTLGH.

This sequence belongs to the class-I aminoacyl-tRNA synthetase family. Glutamate--tRNA ligase type 2 subfamily.

It localises to the cytoplasm. It carries out the reaction tRNA(Glu) + L-glutamate + ATP = L-glutamyl-tRNA(Glu) + AMP + diphosphate. In terms of biological role, catalyzes the attachment of glutamate to tRNA(Glu) in a two-step reaction: glutamate is first activated by ATP to form Glu-AMP and then transferred to the acceptor end of tRNA(Glu). This chain is Glutamate--tRNA ligase, found in Korarchaeum cryptofilum (strain OPF8).